The chain runs to 206 residues: Outer-membrane lipoprotein LolB (206 aa).

The first 18 residues, 1 to 18, serve as a signal peptide directing secretion; it reads MSLLKNLLAPCLALLLAG. Cys19 carries the N-palmitoyl cysteine lipid modification. Cys19 carries S-diacylglycerol cysteine lipidation.

This sequence belongs to the LolB family. As to quaternary structure, monomer.

It localises to the cell outer membrane. Plays a critical role in the incorporation of lipoproteins in the outer membrane after they are released by the LolA protein. This chain is Outer-membrane lipoprotein LolB, found in Stutzerimonas stutzeri (strain A1501) (Pseudomonas stutzeri).